Consider the following 219-residue polypeptide: MTDDTAAPPPRGPARDWKSSPLVSGLLLGLFSLVSALMLALASDATRGPIAARSAEDLLASLAQVLPETLHDNDPTADIRTLSDADEGAVRVYVAARGGAVTAVTFELTGYGYGGAIRVLMAVAADGTILGARVLSHTETPGLGDKIEIGKDDWIEGFAGRSLTDPGPAGWKVRRDGGVFDQFSGATITPRAVVGTIHRGLTLFDRHRAELLAPLPPRS.

The helical transmembrane segment at 25–45 (GLLLGLFSLVSALMLALASDA) threads the bilayer. Residue Thr187 is modified to FMN phosphoryl threonine.

The protein belongs to the RnfG family. As to quaternary structure, the complex is composed of six subunits: RnfA, RnfB, RnfC, RnfD, RnfE and RnfG. FMN is required as a cofactor.

The protein localises to the cellular chromatophore membrane. Part of a membrane-bound complex that couples electron transfer with translocation of ions across the membrane. The polypeptide is Ion-translocating oxidoreductase complex subunit G (Cereibacter sphaeroides (strain ATCC 17023 / DSM 158 / JCM 6121 / CCUG 31486 / LMG 2827 / NBRC 12203 / NCIMB 8253 / ATH 2.4.1.) (Rhodobacter sphaeroides)).